The following is a 359-amino-acid chain: MSSSPSLNTWSDALSGLSIGWFPLGLVIIAAIPLVFIALYALTYGVYGERKISAFMQDRLGPMEVGIWGLLQTLADILKLLQKEDIVPKLADKFLFVIGPGILFVGSFLAFAVLPFGPAFIGADLNVGLFYAVGIVAIEVVGILAAGWGSNNKWALYGAVRSVAQIVSYEIPASIALLCAAMLAGTLSMQQITMMQAGPGGFMHWFLFTNPIAWLPFLIYFISSLAETNRAPFDIPEAESELVAGYFTEYSGMKFAVIFLAEYGRMFMVSAIISIAFLGGWTSPLPNIGGLELNTMTSGPVWGAFWIIMKGFFFIFVQMWLRWTLPRLRVDQLMYLCWKVLTPFSLIAFVLTAIWVINH.

8 helical membrane passes run 19 to 39 (IGWF…FIAL), 94 to 114 (FLFV…FAVL), 127 to 147 (VGLF…LAAG), 166 to 186 (IVSY…LAGT), 202 to 222 (FMHW…IYFI), 266 to 286 (MFMV…SPLP), 301 to 321 (VWGA…QMWL), and 337 to 357 (CWKV…IWVI).

This sequence belongs to the complex I subunit 1 family. NDH-1 is composed of 14 different subunits. Subunits NuoA, H, J, K, L, M, N constitute the membrane sector of the complex.

The protein resides in the cell inner membrane. It catalyses the reaction a quinone + NADH + 5 H(+)(in) = a quinol + NAD(+) + 4 H(+)(out). In terms of biological role, NDH-1 shuttles electrons from NADH, via FMN and iron-sulfur (Fe-S) centers, to quinones in the respiratory chain. The immediate electron acceptor for the enzyme in this species is believed to be ubiquinone. Couples the redox reaction to proton translocation (for every two electrons transferred, four hydrogen ions are translocated across the cytoplasmic membrane), and thus conserves the redox energy in a proton gradient. This subunit may bind ubiquinone. This is NADH-quinone oxidoreductase subunit H from Chlorobaculum parvum (strain DSM 263 / NCIMB 8327) (Chlorobium vibrioforme subsp. thiosulfatophilum).